A 1710-amino-acid polypeptide reads, in one-letter code: Neurexin-2 (1710 aa).

Residues 1 to 28 (MALGSRWQPPPQLPPLLLLLALAAGVRG) form the signal peptide. Positions 29 to 206 (LEFGGGPGQW…LRGAAADPLC (178 aa)) constitute a Laminin G-like 1 domain. The Extracellular segment spans residues 29–1634 (LEFGGGPGQW…EVIRESSSTT (1606 aa)). Asn60 carries N-linked (GlcNAc...) asparagine glycosylation. The 41-residue stretch at 202 to 242 (ADPLCAPARNPCANGGLCTVLAPGEVGCDCSHTGFGGKFCS) folds into the EGF-like 1 domain. 3 disulfides stabilise this stretch: Cys206/Cys219, Cys213/Cys229, and Cys231/Cys241. Laminin G-like domains lie at 289–486 (VATF…SFRC) and 493–686 (DPVT…APFC). A Ca(2+)-binding site is contributed by Asp335. An N-linked (GlcNAc...) asparagine glycan is attached at Asn338. Ca(2+) contacts are provided by Leu352 and Met420. Cystine bridges form between Cys450–Cys486, Cys657–Cys686, Cys694–Cys705, Cys699–Cys714, and Cys716–Cys726. The EGF-like 2 domain occupies 690–727 (TLKQCASAPCRNGGICREGWNRFVCDCIGTGFLGRVCE). Laminin G-like domains are found at residues 732–904 (VLSY…ITYC) and 918–1093 (DPVT…ERGC). The Ca(2+) site is built by Asp779 and Leu796. Asn841 carries an N-linked (GlcNAc...) asparagine glycan. Arg854 contacts Ca(2+). 4 disulfides stabilise this stretch: Cys1065/Cys1093, Cys1100/Cys1111, Cys1105/Cys1120, and Cys1122/Cys1132. One can recognise an EGF-like 3 domain in the interval 1096–1133 (PSTTCTEESCANQGVCLQQWDGFTCDCTMTSYGGPVCN). The Laminin G-like 6 domain maps to 1137–1345 (TTYIFGKGGA…HLRLVGEGPS (209 aa)). Residues Asp1189, Val1206, Ile1288, and Asn1290 each contribute to the Ca(2+) site. O-linked (Xyl...) (heparan sulfate) serine glycosylation occurs at Ser1400. Disordered stretches follow at residues 1458-1508 (ATQD…LPPT) and 1587-1621 (EPRRPPPLRPGVTSAPGFPRLPTANPTGPGERGPP). A helical transmembrane segment spans residues 1635–1655 (GMVVGIVAAAALCILILLYAM). The Cytoplasmic segment spans residues 1656–1710 (YKYRNRDEGSYQVDQSRNYISNSAQSNGAVVKEKAPAAPKTPSKAKKNKDKEYYV). The interval 1677 to 1710 (NSAQSNGAVVKEKAPAAPKTPSKAKKNKDKEYYV) is disordered.

As to quaternary structure, the laminin G-like domain 1 binds to NXPH1. Interacts with PATJ. Interacts with CBLN1, CBLN2 and, less avidly, with CBLN4. Specific isoforms bind neuroligins NLGN1, NLGN2 and NLGN3. Specific isoforms bind to alpha-dystroglycan. Interacts (via Laminin G-like 1 domain) with IGSF21 (Ig-like 1 domain) in a trans-interaction manner. Interacts with CLSTN3. O-glycosylated; contains heparan sulfate. Heparan sulfate attachment is required for synapse development by mediating interactions with neuroligins.

Its subcellular location is the presynaptic cell membrane. Its function is as follows. Neuronal cell surface protein that may be involved in cell recognition and cell adhesion. May mediate intracellular signaling. The sequence is that of Neurexin-2 from Mus musculus (Mouse).